The sequence spans 97 residues: Aspartyl/glutamyl-tRNA(Asn/Gln) amidotransferase subunit C (97 aa).

This sequence belongs to the GatC family. As to quaternary structure, heterotrimer of A, B and C subunits.

The catalysed reaction is L-glutamyl-tRNA(Gln) + L-glutamine + ATP + H2O = L-glutaminyl-tRNA(Gln) + L-glutamate + ADP + phosphate + H(+). It carries out the reaction L-aspartyl-tRNA(Asn) + L-glutamine + ATP + H2O = L-asparaginyl-tRNA(Asn) + L-glutamate + ADP + phosphate + 2 H(+). Allows the formation of correctly charged Asn-tRNA(Asn) or Gln-tRNA(Gln) through the transamidation of misacylated Asp-tRNA(Asn) or Glu-tRNA(Gln) in organisms which lack either or both of asparaginyl-tRNA or glutaminyl-tRNA synthetases. The reaction takes place in the presence of glutamine and ATP through an activated phospho-Asp-tRNA(Asn) or phospho-Glu-tRNA(Gln). This is Aspartyl/glutamyl-tRNA(Asn/Gln) amidotransferase subunit C from Sulfolobus acidocaldarius (strain ATCC 33909 / DSM 639 / JCM 8929 / NBRC 15157 / NCIMB 11770).